Consider the following 255-residue polypeptide: tRNA (guanine-N(1)-)-methyltransferase (255 aa).

S-adenosyl-L-methionine contacts are provided by residues G113 and 133–138 (IGDYVL).

The protein belongs to the RNA methyltransferase TrmD family. As to quaternary structure, homodimer.

The protein resides in the cytoplasm. The catalysed reaction is guanosine(37) in tRNA + S-adenosyl-L-methionine = N(1)-methylguanosine(37) in tRNA + S-adenosyl-L-homocysteine + H(+). Its function is as follows. Specifically methylates guanosine-37 in various tRNAs. The sequence is that of tRNA (guanine-N(1)-)-methyltransferase from Serratia proteamaculans (strain 568).